The chain runs to 476 residues: Aspartyl/glutamyl-tRNA(Asn/Gln) amidotransferase subunit B (476 aa).

The protein belongs to the GatB/GatE family. GatB subfamily. In terms of assembly, heterotrimer of A, B and C subunits.

It catalyses the reaction L-glutamyl-tRNA(Gln) + L-glutamine + ATP + H2O = L-glutaminyl-tRNA(Gln) + L-glutamate + ADP + phosphate + H(+). The catalysed reaction is L-aspartyl-tRNA(Asn) + L-glutamine + ATP + H2O = L-asparaginyl-tRNA(Asn) + L-glutamate + ADP + phosphate + 2 H(+). In terms of biological role, allows the formation of correctly charged Asn-tRNA(Asn) or Gln-tRNA(Gln) through the transamidation of misacylated Asp-tRNA(Asn) or Glu-tRNA(Gln) in organisms which lack either or both of asparaginyl-tRNA or glutaminyl-tRNA synthetases. The reaction takes place in the presence of glutamine and ATP through an activated phospho-Asp-tRNA(Asn) or phospho-Glu-tRNA(Gln). The protein is Aspartyl/glutamyl-tRNA(Asn/Gln) amidotransferase subunit B of Clostridium kluyveri (strain ATCC 8527 / DSM 555 / NBRC 12016 / NCIMB 10680 / K1).